The primary structure comprises 162 residues: Corticoliberin (162 aa).

Positions 1–24 are cleaved as a signal peptide; that stretch reads MKLNFLVTTVALLVAFPPPYECRA. The propeptide occupies 25–119; it reads IEGSSNQPAT…ALDSVERERR (95 aa). F160 is subject to Phenylalanine amide.

It belongs to the sauvagine/corticotropin-releasing factor/urotensin I family.

It is found in the secreted. Functionally, this hormone from hypothalamus regulates the release of corticotropin from pituitary gland. This is Corticoliberin (crh) from Carassius auratus (Goldfish).